Here is a 471-residue protein sequence, read N- to C-terminus: Putative multidrug resistance protein MdtD (471 aa).

Topologically, residues 1–11 are periplasmic; the sequence is MTDLPDSTRWQ. A helical membrane pass occupies residues 12-32; sequence LWIVAFGFFMQSLDTTIVNTA. Residues 33 to 48 are Cytoplasmic-facing; it reads LPSMAQSLGESPLHMH. The chain crosses the membrane as a helical span at residues 49 to 69; the sequence is MVIVSYVLTVAVMLPASGWLA. Residues 70-76 are Periplasmic-facing; the sequence is DKVGVRN. The chain crosses the membrane as a helical span at residues 77 to 97; sequence IFFTAIVLFTLGSLFCALSGT. Over 98 to 101 the chain is Cytoplasmic; that stretch reads LNEL. A helical transmembrane segment spans residues 102–124; it reads LLARALQGVGGAMMVPVGRLTVM. The Periplasmic portion of the chain corresponds to 125–137; sequence KIVPREQYMAAMT. A helical membrane pass occupies residues 138–158; the sequence is FVTLPGQVGPLLGPALGGLLV. Residues 159–164 are Cytoplasmic-facing; it reads EYASWH. Residues 165–185 form a helical membrane-spanning segment; it reads WIFLINIPVGIIGAIATLMLM. Residues 186–196 are Periplasmic-facing; it reads PNYTMQTRRFD. The chain crosses the membrane as a helical span at residues 197-217; sequence LSGFLLLAVGMAVLTLALDGS. Residues 218–224 are Cytoplasmic-facing; it reads KGTGLSP. A helical transmembrane segment spans residues 225 to 245; that stretch reads LAITGLVAVGVVALVLYLLHA. Over 246–262 the chain is Periplasmic; it reads RNNNRALFSLKLFRTRT. A helical membrane pass occupies residues 263 to 283; it reads FSLGLAGSFAGRIGSGMLPFM. At 284 to 285 the chain is on the cytoplasmic side; the sequence is TP. The helical transmembrane segment at 286–306 threads the bilayer; it reads VFLQIGLGFSPFHAGLMMIPM. Residues 307–341 lie on the Periplasmic side of the membrane; the sequence is VLGSMGMKRIVVQVVNRFGYRRVLVATTLGLSLVT. The chain crosses the membrane as a helical span at residues 342–362; it reads LLFMTTALLGWYYVLPFVLFL. The Cytoplasmic segment spans residues 363 to 395; the sequence is QGMVNSTRFSSMNTLTLKDLPDNLASSGNSLLS. A helical membrane pass occupies residues 396-416; sequence MIMQLSMSIGVTIAGLLLGLF. Residues 417 to 430 are Periplasmic-facing; that stretch reads GSQHVSVDSSTTQT. The chain crosses the membrane as a helical span at residues 431–451; the sequence is VFMYTWLSMAFIIALPAFIFA. Topologically, residues 452–471 are cytoplasmic; that stretch reads RVPNDTHQNVAISRRKRSAQ.

Belongs to the major facilitator superfamily. TCR/Tet family.

The protein resides in the cell inner membrane. This chain is Putative multidrug resistance protein MdtD, found in Escherichia coli O157:H7.